The primary structure comprises 341 residues: tRNA N6-adenosine threonylcarbamoyltransferase (341 aa).

Fe cation contacts are provided by histidine 111 and histidine 115. Substrate contacts are provided by residues 134-138 (LVSGG), aspartate 167, glycine 180, and asparagine 276. Aspartate 304 provides a ligand contact to Fe cation.

It belongs to the KAE1 / TsaD family. Fe(2+) is required as a cofactor.

It localises to the cytoplasm. It carries out the reaction L-threonylcarbamoyladenylate + adenosine(37) in tRNA = N(6)-L-threonylcarbamoyladenosine(37) in tRNA + AMP + H(+). In terms of biological role, required for the formation of a threonylcarbamoyl group on adenosine at position 37 (t(6)A37) in tRNAs that read codons beginning with adenine. Is involved in the transfer of the threonylcarbamoyl moiety of threonylcarbamoyl-AMP (TC-AMP) to the N6 group of A37, together with TsaE and TsaB. TsaD likely plays a direct catalytic role in this reaction. The protein is tRNA N6-adenosine threonylcarbamoyltransferase of Ectopseudomonas mendocina (strain ymp) (Pseudomonas mendocina).